The chain runs to 477 residues: tRNA-2-methylthio-N(6)-dimethylallyladenosine synthase (477 aa).

Residues 3-120 (KKLHIKTWGC…LPTMIKQVQE (118 aa)) form the MTTase N-terminal domain. The [4Fe-4S] cluster site is built by Cys12, Cys49, Cys83, Cys157, Cys161, and Cys164. The Radical SAM core domain maps to 143–375 (RAEGATAFVS…QHVINNQSMQ (233 aa)). In terms of domain architecture, TRAM spans 378–441 (RAMLGSTQRI…PNSLRGKFLR (64 aa)).

Belongs to the methylthiotransferase family. MiaB subfamily. As to quaternary structure, monomer. Requires [4Fe-4S] cluster as cofactor.

It localises to the cytoplasm. The enzyme catalyses N(6)-dimethylallyladenosine(37) in tRNA + (sulfur carrier)-SH + AH2 + 2 S-adenosyl-L-methionine = 2-methylsulfanyl-N(6)-dimethylallyladenosine(37) in tRNA + (sulfur carrier)-H + 5'-deoxyadenosine + L-methionine + A + S-adenosyl-L-homocysteine + 2 H(+). In terms of biological role, catalyzes the methylthiolation of N6-(dimethylallyl)adenosine (i(6)A), leading to the formation of 2-methylthio-N6-(dimethylallyl)adenosine (ms(2)i(6)A) at position 37 in tRNAs that read codons beginning with uridine. In Aeromonas hydrophila subsp. hydrophila (strain ATCC 7966 / DSM 30187 / BCRC 13018 / CCUG 14551 / JCM 1027 / KCTC 2358 / NCIMB 9240 / NCTC 8049), this protein is tRNA-2-methylthio-N(6)-dimethylallyladenosine synthase.